A 1081-amino-acid chain; its full sequence is MAGNEWINGYLEAILDTGASAIDENSGGGKTAAAQKGRHHDHHFNPTKYFVEEVVSGVDESDLHRTWIKVVATRNTRERSSRLENMCWRIWHLTRKKKQLEWEDLQRLAARKWEREQGRKDVTEDMSEDLSEGEKGDVMGETPVALDSPRGNKKYHRNFSNLEVWSDSNKEKKLYIVLISLHGLVRGENMELGRDSDTGGQIKYVVEVARALAKMPGVYRVDLFTRQISSPEVDWSYAEPTEMLSSSSTTAGEAHEPEEEEEEEDLGEGSGAYIIRIPFGPRDKYLRKELLWPHIQEFVDGALSHIVNMSKALGDQIGGGQPVWPYVIHGHYADAGDSAALLSGALNVPMVLTGHSLGRNKLEQLLKQGRQTKEDINSMYRIMRRIEAEELSLDAAELVITSTKQEIEEQWGLYDGFDVKLERVLRARARRGVNCHGRFMPRMAVIPPGMDFSNVVVPEDGSEGDGDLATLTEATSPRSVPAIWADVMRFLTNPHKPMILALSRPDPKKNITTLVKAFGECRPLRELANLTLIMGNRDDIDEMSGGNASVLTTVLKLIDRYDLYGQVAFPKHHKQSDVPEIYRLASKTKGVFINPAFIEPFGLTLIEAAAHGLPMVATKNGGPVDIHRALNNGLLVDPHDQDAIANALLKLVSEKNLWNECRKNGLKNIHLFSWPEHCRTYLTRVAACRMRHPQWKTDTPLDETAIDDSLNDSLKDVLDMSLRLSVDGEKMSVNESSSVELPGGEAAELPDQVRRVLNKIKRQDSGPAQREAEGKAGDVPGKYPMLRRRRKLFVIALDCYDLKGNPDKKMILSIQEIVRAVRLDPQMSRFSGFALSTAMPVAELADFLKAGDVKVNDFDALICSSGSEVYYPGTYGEESGKLYLDPDYTSHIEYRWGGDGLKKTISKLMNTAEDGKSSVASSPIELVAKSSNSHCLSYAIKDPSKAKKVDDMRQKLRMRGLRCHLMYCRNSTSMQVVPLLASRSQALRYLFVRWRLSVANMYVILGETGDTDYEELISGTHKTLIMRGVVEKGSEELLRTAGSYLRDDVIPQDTPLIAYADKGAKAEHIVETFRQLSKAGM.

Disordered regions lie at residues 116–152, 239–267, and 760–780; these read EQGR…PRGN, EPTE…EDLG, and IKRQ…GDVP. The segment covering 256–267 has biased composition (acidic residues); the sequence is EPEEEEEEEDLG.

This sequence belongs to the glycosyltransferase 1 family. In terms of assembly, homodimer or homotetramer.

The catalysed reaction is beta-D-fructose 6-phosphate + UDP-alpha-D-glucose = sucrose 6(F)-phosphate + UDP + H(+). The protein operates within glycan biosynthesis; sucrose biosynthesis; sucrose from D-fructose 6-phosphate and UDP-alpha-D-glucose: step 1/2. With respect to regulation, activity is regulated by phosphorylation and moderated by concentration of metabolites and light. Its function is as follows. Plays a role in photosynthetic sucrose synthesis by catalyzing the rate-limiting step of sucrose biosynthesis from UDP-glucose and fructose- 6-phosphate. Involved in the regulation of carbon partitioning in the leaves of plants. May regulate the synthesis of sucrose and therefore play a major role as a limiting factor in the export of photoassimilates out of the leaf. Plays a role for sucrose availability that is essential for plant growth and fiber elongation. The polypeptide is Probable sucrose-phosphate synthase 2 (SPS2) (Craterostigma plantagineum (Blue gem)).